Here is a 371-residue protein sequence, read N- to C-terminus: MPHHYILTLFGLLPVATNISTWWNFGSMLLTCLALQVLTGFFLAVHYTANINLAFSSIVHITRDVPYGWMMQNLHAIGASMFFICIYIHIARGLYYGSYLNKETWMSGITLLITLMATAFFGYVLPWGQMSFWAATVITNLLTAVPYLGTSLTTWLWGGFAINDPTLTRFFALHFILPFAIISLSSLHIILLHEEGSSNPLGTNPDIDKIPFHPYHTHKDLLLLTLMILLLLIIVSFSPDIFHDPDNFSKANPLVTPQHIKPELYFLFAYGILRSIPNKLGGALALVMSIMILFTIPFTHTAHLRPMTFRPLSQLMFWALISTFVTITWAATKPVEPPFIIISQVTSTLYFTFFLSIPILGWVENKMMNIS.

Helical transmembrane passes span 25 to 45, 69 to 90, 105 to 125, and 170 to 190; these read FGSMLLTCLALQVLTGFFLAV, WMMQNLHAIGASMFFICIYIHI, WMSGITLLITLMATAFFGYVL, and FFALHFILPFAIISLSSLHII. Heme b-binding residues include His-75 and His-89. Heme b is bound by residues His-174 and His-188. His-193 is a binding site for a ubiquinone. Helical transmembrane passes span 218 to 238, 280 to 300, 312 to 332, and 339 to 358; these read HKDLLLLTLMILLLLIIVSFS, LGGALALVMSIMILFTIPFTH, LSQLMFWALISTFVTITWAAT, and FIIISQVTSTLYFTFFLSIP.

The protein belongs to the cytochrome b family. In terms of assembly, the cytochrome bc1 complex contains 3 respiratory subunits (MT-CYB, CYC1 and UQCRFS1), 2 core proteins (UQCRC1 and UQCRC2) and probably 6 low-molecular weight proteins. Requires heme b as cofactor.

The protein resides in the mitochondrion inner membrane. Component of the ubiquinol-cytochrome c reductase complex (complex III or cytochrome b-c1 complex) that is part of the mitochondrial respiratory chain. The b-c1 complex mediates electron transfer from ubiquinol to cytochrome c. Contributes to the generation of a proton gradient across the mitochondrial membrane that is then used for ATP synthesis. This chain is Cytochrome b (MT-CYB), found in Antaresia childreni (Children's python).